Here is a 328-residue protein sequence, read N- to C-terminus: Cell division protein ZipA (328 aa).

The Periplasmic segment spans residues 1 to 6 (MMQDLR). The chain crosses the membrane as a helical span at residues 7-27 (LILIVVGAIAIIALLLHGLWT). The Cytoplasmic portion of the chain corresponds to 28–328 (SRKERSSLFR…REVLDANTIA (301 aa)). The span at 61 to 72 (GEVRVRTSHPQE) shows a compositional bias: basic and acidic residues. Residues 61-183 (GEVRVRTSHP…EPVAPAPEAK (123 aa)) form a disordered region. 2 stretches are compositionally biased toward polar residues: residues 95–104 (KSAQVKTASR) and 164–174 (APQQHVESQQE).

This sequence belongs to the ZipA family. Interacts with FtsZ via their C-terminal domains.

The protein localises to the cell inner membrane. Its function is as follows. Essential cell division protein that stabilizes the FtsZ protofilaments by cross-linking them and that serves as a cytoplasmic membrane anchor for the Z ring. Also required for the recruitment to the septal ring of downstream cell division proteins. The polypeptide is Cell division protein ZipA (Yersinia pestis bv. Antiqua (strain Antiqua)).